Here is a 642-residue protein sequence, read N- to C-terminus: Zinc finger protein 14 (642 aa).

Positions 4 to 76 constitute a KRAB domain; that stretch reads VSFEDVAVNF…MVERLCESRK (73 aa). The C2H2-type 1 zinc finger occupies 103–125; it reads HECSFCGRDFMHHSSLNRHMRSH. The C2H2-type 2; degenerate zinc-finger motif lies at 141–163; the sequence is RKHKAVEKTFSYHHCFRKHERTH. The segment at 169–191 adopts a C2H2-type 3 zinc-finger fold; the sequence is YECKQCGKAFIYYQPFQRHERTH. The segment at 197–217 adopts a C2H2-type 4; atypical zinc-finger fold; sequence YECKQCGKTFIYYQSFQQHAH. C2H2-type zinc fingers lie at residues 223 to 245, 251 to 273, 279 to 301, 307 to 329, 335 to 357, 363 to 385, 391 to 413, 419 to 441, 447 to 469, 475 to 497, 503 to 525, 531 to 553, 559 to 581, 587 to 609, and 615 to 637; these read YECK…ERTH, YKCK…KRTH, YECK…VITH, YKCK…ERTH, YECK…ETTH, YECK…ERSH, YECK…EKIH, FECK…ERTH, YQCK…ERTH, and YRCK…ERSH.

The protein belongs to the krueppel C2H2-type zinc-finger protein family.

The protein resides in the nucleus. Its function is as follows. May be involved in transcriptional regulation. The protein is Zinc finger protein 14 (ZNF14) of Pongo abelii (Sumatran orangutan).